A 907-amino-acid polypeptide reads, in one-letter code: Glutamate receptor 1 (907 aa).

The signal sequence occupies residues 1 to 18 (MPYIFAFFCTGFLGAVVG). Topologically, residues 19–536 (ANFPNNIQIG…GVFSFLDPLA (518 aa)) are extracellular. Residues Asn-63, Asn-249, Asn-257, Asn-363, Asn-401, and Asn-406 are each glycosylated (N-linked (GlcNAc...) asparagine). Cysteines 75 and 323 form a disulfide. 3 residues coordinate L-glutamate: Pro-492, Thr-494, and Arg-499. A helical membrane pass occupies residues 537 to 557 (YEIWMCIVFAYIGVSVVLFLV). The Cytoplasmic segment spans residues 558–584 (SRFSPYEWHSEEFEEGRDQTTSDQSNE). The segment at residues 585–600 (FGIFNSLWFSLGAFMQ) is an intramembrane region (helical; Pore-forming). Residues 601-603 (QGC) lie within the membrane without spanning it. Cys-603 carries S-palmitoyl cysteine lipidation. Residues 604 to 609 (DISPRS) are Cytoplasmic-facing. Residues 610 to 630 (LSGRIVGGVWWFFTLIIISSY) form a helical membrane-spanning segment. The Extracellular portion of the chain corresponds to 631–805 (TANLAAFLTV…DKTSALSLSN (175 aa)). At Ser-645 the chain carries Phosphoserine. Ser-668 and Thr-669 together coordinate L-glutamate. Ser-710 is modified (phosphoserine). Glu-719 provides a ligand contact to L-glutamate. Residues Cys-732 and Cys-787 are joined by a disulfide bond. The helical transmembrane segment at 806-826 (VAGVFYILIGGLGLAMLVALI) threads the bilayer. Residues 827–907 (EFCYKSRSES…SGMPLGATGL (81 aa)) are Cytoplasmic-facing. Cys-829 carries the S-palmitoyl cysteine lipid modification. Residues Ser-849 and Ser-863 each carry the phosphoserine modification. Positions 857 to 881 (STLPRNSGAGASGGSGSGENGRVVS) are disordered. Gly residues predominate over residues 866–875 (GASGGSGSGE). Positions 904 to 907 (ATGL) match the PDZ-binding motif.

It belongs to the glutamate-gated ion channel (TC 1.A.10.1) family. GRIA1 subfamily. Homotetramer or heterotetramer of pore-forming glutamate receptor subunits. Heteromeric assembly can be the result of both receptor subtype and flip or flop form and according the composition, one partner can be dominant with respect to the fast desensitizing current component, whereas the other can determine the steady-state component. Tetramers may be formed by the dimerization of dimers. Found in a complex with GRIA2, GRIA3, GRIA4, CNIH2, CNIH3, CACNG2, CACNG3, CACNG4, CACNG5, CACNG7 and CACNG8. Interacts with HIP1 and RASGRF2. Interacts with SYNDIG1 and GRIA2. Interacts with DLG1 (via C-terminus). Interacts with LRFN1. Interacts with PRKG2. Interacts with CNIH2 and CACNG2. Interacts with CACNG5; this interaction modulates the gating. Interacts (via C-terminus) with PDLIM4 (via LIM domain); this interaction as well as the interaction of PDLIM4 with alpha-actinin is required for their colocalization in early endosomes. Interacts with SNX27 (via PDZ domain); the interaction is required for recycling to the plasma membrane when endocytosed and prevent degradation in lysosomes. Interacts (via PDZ-binding motif) with SHANK3 (via PDZ domain). Interacts with CACNG3; associates GRIA1 with the adapter protein complex 4 (AP-4) to target GRIA1 to the somatodendritic compartment of neurons. Interacts with CACNG2; this interaction mediates traffick to the plasma membrane and modulation of desensitization. Interacts with CNIH2 and CNIH3; this interaction promotes expression at the plasma membrane and extensively modulates their gating properties by slowing deactivation and desensitization kinetics. Found in a complex with GRIA2, GRIA3, GRIA4, DLG4, CACNG8 and CNIH2. Phosphorylated at Ser-645. Phosphorylated at Ser-710 by PKC. Phosphorylated at Ser-849 by PKC, PKA and CAMK2. Phosphorylated at Ser-863 by PKC, PKA and PRKG2. Phosphorylation of Ser-863 is reduced by induction of long-term depression and increased by induction of long-term potentiation. Post-translationally, palmitoylated. Depalmitoylated by CPT1C and upon L-glutamate stimulation. ZDHHC3/GODZ specifically palmitoylates Cys-603, which leads to Golgi retention and decreased cell surface expression. In contrast, Cys-829 palmitoylation does not affect cell surface expression but regulates stimulation-dependent endocytosis. As to expression, expressed in the outer plexiform layer of the retina of the eye (at protein level). Expressed in the forebrain and hippocampus (at protein level).

The protein resides in the cell membrane. The protein localises to the endoplasmic reticulum membrane. It localises to the postsynaptic cell membrane. Its subcellular location is the postsynaptic density membrane. It is found in the cell projection. The protein resides in the dendrite. The protein localises to the dendritic spine. It localises to the early endosome membrane. Its subcellular location is the recycling endosome membrane. It is found in the presynapse. The protein resides in the synapse. It catalyses the reaction Ca(2+)(in) = Ca(2+)(out). The enzyme catalyses Na(+)(in) = Na(+)(out). The catalysed reaction is Mg(2+)(in) = Mg(2+)(out). It carries out the reaction Li(+)(in) = Li(+)(out). It catalyses the reaction K(+)(in) = K(+)(out). The enzyme catalyses Sr(2+)(in) = Sr(2+)(out). Functionally, ionotropic glutamate receptor that functions as a ligand-gated cation channel, gated by L-glutamate and glutamatergic agonists such as alpha-amino-3-hydroxy-5-methyl-4-isoxazolepropionic acid (AMPA), quisqualic acid, and kainic acid. L-glutamate acts as an excitatory neurotransmitter at many synapses in the central nervous system. Binding of the excitatory neurotransmitter L-glutamate induces a conformation change, leading to the opening of the cation channel, and thereby converts the chemical signal to an electrical impulse upon entry of monovalent and divalent cations such as sodium and calcium. The receptor then desensitizes rapidly and enters in a transient inactive state, characterized by the presence of bound agonist. In the presence of CACNG2 or CACNG4 or CACNG7 or CACNG8, shows resensitization which is characterized by a delayed accumulation of current flux upon continued application of L-glutamate. Calcium (Ca(2+)) permeability depends on subunits composition and, heteromeric channels containing edited GRIA2 subunit are calcium-impermeable. Also permeable to other divalents cations such as strontium(2+) and magnesium(2+) and monovalent cations such as potassium(1+) and lithium(1+). This Mus musculus (Mouse) protein is Glutamate receptor 1.